The chain runs to 226 residues: PKHD-type hydroxylase PST_0995 (226 aa).

Positions 78 to 178 (KVFPPLFNCY…RLASFFWIQS (101 aa)) constitute a Fe2OG dioxygenase domain. Residues His96, Asp98, and His159 each contribute to the Fe cation site. Arg169 lines the 2-oxoglutarate pocket.

Fe(2+) serves as cofactor. L-ascorbate is required as a cofactor.

The sequence is that of PKHD-type hydroxylase PST_0995 from Stutzerimonas stutzeri (strain A1501) (Pseudomonas stutzeri).